We begin with the raw amino-acid sequence, 389 residues long: 1-deoxy-D-xylulose 5-phosphate reductoisomerase (389 aa).

T10, G11, S12, I13, N38, and N122 together coordinate NADPH. K123 provides a ligand contact to 1-deoxy-D-xylulose 5-phosphate. E124 lines the NADPH pocket. D148 serves as a coordination point for Mn(2+). Residues S149, E150, S173, and H196 each coordinate 1-deoxy-D-xylulose 5-phosphate. Mn(2+) is bound at residue E150. Residue G202 coordinates NADPH. Positions 209, 214, 215, and 218 each coordinate 1-deoxy-D-xylulose 5-phosphate. Position 218 (E218) interacts with Mn(2+).

This sequence belongs to the DXR family. It depends on Mg(2+) as a cofactor. Requires Mn(2+) as cofactor.

It catalyses the reaction 2-C-methyl-D-erythritol 4-phosphate + NADP(+) = 1-deoxy-D-xylulose 5-phosphate + NADPH + H(+). Its pathway is isoprenoid biosynthesis; isopentenyl diphosphate biosynthesis via DXP pathway; isopentenyl diphosphate from 1-deoxy-D-xylulose 5-phosphate: step 1/6. In terms of biological role, catalyzes the NADPH-dependent rearrangement and reduction of 1-deoxy-D-xylulose-5-phosphate (DXP) to 2-C-methyl-D-erythritol 4-phosphate (MEP). The chain is 1-deoxy-D-xylulose 5-phosphate reductoisomerase from Wolbachia sp. subsp. Brugia malayi (strain TRS).